The primary structure comprises 338 residues: Cytochrome bd ubiquinol oxidase subunit 2 (338 aa).

Helical transmembrane passes span 7-27 (LWFILVAVLFVGFFFLEGFDF), 50-70 (IGPFWDANEVWLLTGAGAIFA), 75-95 (WYATMLSGYYIPFVIVLLALM), 119-139 (VVFFGSLIPPFVLGVLFTTLF), 163-183 (ILGGVTVTLLCFQHGLMFITL), 196-216 (MAQKIMGVVFVAVLAFAALSA), 227-247 (EITIPLAVLIVICFMLAAVFI), 256-276 (FGMTGAGLALTVGMIFISLFP), and 306-326 (IAALTLLPFVIGSQIWSYYVF).

This sequence belongs to the cytochrome ubiquinol oxidase subunit 2 family. As to quaternary structure, heterodimer of subunits I and II. Heme b serves as cofactor. Heme d cis-diol is required as a cofactor.

The protein resides in the cell membrane. The enzyme catalyses 2 a ubiquinol + O2(in) + 4 H(+)(in) = 2 a ubiquinone + 2 H2O(in) + 4 H(+)(out). This is Cytochrome bd ubiquinol oxidase subunit 2 (cydB) from Bacillus subtilis (strain 168).